The chain runs to 133 residues: S-protein homolog 21 (133 aa).

The first 21 residues, 1 to 21, serve as a signal peptide directing secretion; it reads MKNLSIFLFVVGLCMISDVYG.

Belongs to the plant self-incompatibility (S1) protein family.

Its subcellular location is the secreted. In Arabidopsis thaliana (Mouse-ear cress), this protein is S-protein homolog 21.